The following is a 1653-amino-acid chain: Cortactin-binding protein 2 (1653 aa).

5 disordered regions span residues 1–27 (MATDGASCEPDASRAPEEAAGATAEAA), 203–222 (KKKTNELEEELSAEKRRSTE), 268–297 (QLKRGSDSKPSLSLPRKTKDRRSVSISVGT), 314–339 (ESTEHVKKSPLTVPVKPSPGSAKGSV), and 356–609 (HGDL…PSID). Residues 119-276 (RKMQERMSTQ…EQLKRGSDSK (158 aa)) are a coiled coil. Polar residues predominate over residues 379–389 (GPSTGSPPDLT). Positions 390–408 (SSAAQSPAAAPHGLPPAHG) are enriched in low complexity. Composition is skewed to polar residues over residues 444–470 (GNANDPDQNGNTTQSPPSRDVSPTSRD), 478–490 (ARNTVTQALSRFT), and 573–584 (TVASSPPSSLPQ). R488 carries the asymmetric dimethylarginine modification. 5 ANK repeats span residues 700–730 (GRPTLLQQAAAQGNVTLLSMLLNEEGLDINY), 734–763 (DGHSALYSAAKNGHTDCVRLLLNAEAQVNA), 767–796 (NGFTPLCAAAAQGHFECVELLIAYDAHINH), 800–829 (GGQTPLYLACKNGNKECIKLLLEAGTDRSV), and 833–862 (DGWTPVHAAVDTGNVDSLKLLMYHGAPAHG). The segment at 860 to 892 (AHGNSLNEEEPESDASDLDEGEESSEGKSKPVV) is disordered. The segment covering 866–883 (NEEEPESDASDLDEGEES) has biased composition (acidic residues). The stretch at 903 to 933 (EGWTAAHIAASKGFKNCLEILCRHRGLEPER) is one ANK 6 repeat. The disordered stretch occupies residues 1441-1472 (ESGAWRKVNTSPRRKSGRFSSPTWNKPDLSNE). Phosphoserine is present on S1514. The tract at residues 1545 to 1653 (DLRTFDSSGN…KNEHIEKLNK (109 aa)) is disordered. 2 stretches are compositionally biased toward polar residues: residues 1549-1564 (FDSSGNNPAFSATANN) and 1572-1589 (KEVSPLSSHQTTECSNNK). Positions 1614–1628 (SQNTKRSSSSSNTRQ) are enriched in low complexity. Residues 1635–1653 (SKEENWNLHKNEHIEKLNK) show a composition bias toward basic and acidic residues.

Interacts with CTTN/cortactin SH3 domain. Interacts with STRN, STRN4/zinedin and MOB4/phocein; this interactions mediate the association with the STRIPAK core complex and may regulate dendritic spine distribution of the STRIPAK complex in hippocampal neurons. Activation of glutamate receptors weakens the interaction with STRN and STRN4.

The protein resides in the cytoplasm. The protein localises to the cell cortex. It localises to the cell projection. It is found in the dendritic spine. Regulates the dendritic spine distribution of CTTN/cortactin in hippocampal neurons, and thus controls dendritic spinogenesis and dendritic spine maintenance. Associates with the striatin-interacting phosphatase and kinase (STRIPAK) core complex to regulate dendritic spine distribution of the STRIPAK complex in hippocampal neurons. The polypeptide is Cortactin-binding protein 2 (CTTNBP2) (Eulemur macaco macaco (Black lemur)).